Here is an 880-residue protein sequence, read N- to C-terminus: MTLLTSSLLLFSLLTSRLEAIPVLEKSPAHPAHSAHTAHPAHPSPGVRILRAPESLVAPLGDEVVLECETSLQPERFEWSHRSSRSPGAGFKYLRTGTAKANVSQEAAISRLRVLVRPDTLGEYRCVGWFGPLVVTSTTARLELASTSLVDAQEPESPLQWRVSAGNSVLWSCGQQVQSNPSASWSYFRNGVEIKPEFIGTNGNLFLSNVSSESSGSYSCQATNPASGERIQLPGSLQLQVTPEQRSQSKSPHLLKGQPSSQEITIREGSSLLLLCPGVGSPPPTVVWSSPDVVGAVKNKRSKVFGHALEISNTRVHDAGTYICFQDNGVRPALEHYIKVHVEQPPQIVRPPWADLTNEGDRLKLECEATGVPTPEIYWLLNGHSSIDDTEAELSNNFLILHSVLKRHAGYVQCFARNRLGEHSAGTLLQVNPKQIQEPRESGGTHRPNPNQGSKHKQMYPPTPPNVTRLTDESVMLRWMVPRNDGLPIVIFKVQYRMVGKRKNWQTTNDNIPYGKPKWNSELGKSFTASVTDLKPEHTYRFRILAVYSNNDNKESNTSAKFYLQPGAALDPMPVPELLEIEEYSETAVVLHWSLASDADEHLITGYYAYYRPSSSAGEYFKATIEGAHARSFKIAPLETATMYEFKLQSFSAVSASEFSALKQGRTQRPKTSTTEEPTLQMGDRDTTTPSHNETFNMSPMLTGTIGGGAVLILLLISTCLCVCRRRNSRSRGNNPNKPRMAELRDDFVPLGNCSPTKQRQRTRHIHITLNPLAQQQQQALEEKNDTDQDAPYYQRPSSYDYDPALRRMSSSSLRRSQRTLERAGGSNGSNNGNNNNLNQTAEAGAVENPGKPGRVLMKRPRLSSRSENLSSGSLNSVGV.

Positions 1–20 (MTLLTSSLLLFSLLTSRLEA) are cleaved as a signal peptide. The Extracellular segment spans residues 21-703 (IPVLEKSPAH…ETFNMSPMLT (683 aa)). Ig-like C2-type domains follow at residues 45–142 (PGVR…TARL), 155–232 (PESP…ERIQ), 252–340 (PHLL…YIKV), and 346–432 (PQIV…LQVN). Intrachain disulfides connect Cys68-Cys126, Cys173-Cys220, Cys276-Cys324, and Cys367-Cys414. Asn102 and Asn209 each carry an N-linked (GlcNAc...) asparagine glycan. The tract at residues 429-467 (LQVNPKQIQEPRESGGTHRPNPNQGSKHKQMYPPTPPNV) is disordered. Fibronectin type-III domains follow at residues 461 to 567 (PPTP…LQPG) and 575 to 670 (VPEL…TQRP). Residue Asn466 is glycosylated (N-linked (GlcNAc...) asparagine). Heparin is bound by residues Arg497, Lys501, Lys503, and Arg541. A glycan (N-linked (GlcNAc...) asparagine) is linked at Asn557. The interval 662-692 (LKQGRTQRPKTSTTEEPTLQMGDRDTTTPSH) is disordered. A compositionally biased stretch (polar residues) spans 665–678 (GRTQRPKTSTTEEP). N-linked (GlcNAc...) asparagine glycosylation is present at Asn693. Residues 704–724 (GTIGGGAVLILLLISTCLCVC) traverse the membrane as a helical segment. The Cytoplasmic portion of the chain corresponds to 725–880 (RRRNSRSRGN…SSGSLNSVGV (156 aa)). 2 disordered regions span residues 728–762 (NSRS…QRQR) and 775–880 (QQQQ…SVGV). Composition is skewed to low complexity over residues 823–837 (RAGG…NNNN) and 864–880 (SSRS…SVGV).

Belongs to the immunoglobulin superfamily. IHOG family. Homodimer. Heterotetramer; 2 iHog chains bind 2 hh chains when facilitated by heparin, heparin is required to promote high-affinity interactions between hh and iHog.

It localises to the membrane. Functionally, mediates response to the active Hedgehog (Hh) protein signal in embryos, functioning upstream or at the level of patched (ptc). The polypeptide is Interference hedgehog (Drosophila simulans (Fruit fly)).